Consider the following 207-residue polypeptide: MANVTLFDQTGKEAGQVVLSDAVFGIEPNESVVFDVIISQRASLRQGTHAVKNRSAVSGGGRKPWRQKGTGRARQGSIRSPQWRGGGVVFGPTPRSYGYKLPQKVRRLALKSVYSEKVAENKFVAVDALSFTAPKTAEFAKVLAALSIDSKVLVILEEGNEFAALSARNLPNVKVATATTASVLDIANSDKLLVTQAAISKIEEVLA.

Residues 49-78 (HAVKNRSAVSGGGRKPWRQKGTGRARQGSI) form a disordered region.

It belongs to the universal ribosomal protein uL4 family. As to quaternary structure, part of the 50S ribosomal subunit.

Its function is as follows. One of the primary rRNA binding proteins, this protein initially binds near the 5'-end of the 23S rRNA. It is important during the early stages of 50S assembly. It makes multiple contacts with different domains of the 23S rRNA in the assembled 50S subunit and ribosome. Functionally, forms part of the polypeptide exit tunnel. This is Large ribosomal subunit protein uL4 from Streptococcus pneumoniae serotype 2 (strain D39 / NCTC 7466).